The primary structure comprises 503 residues: MTAVADAPQAELEGVSSPRAVVVGIMAGEGVQIGVLLDANAPVSVMTDPLLKVVNSRLRELGESTLEAAGRGRWALCLIDGSPLRATQSLTEQDVYDGDRLWIRFIPDTEHRSQVIEHISTAVASNLSKRFASIDPVVAVQVGAGMVGTGVILASGVLGWWRWHHNTWLTTIFASVIAVLVLMVAMMLLMRATTDADRRVADIMLVSGLAPLTVAAASAPPGSVGSPQAVLGFGVLSIAAALALRFTGRRLAIYTAIVTICGLTTLASLSRMVAATSAVTLFATMLLICVVMYHASPALSRRLSGIRLPVFPSATSRWVFEARPDLPTTVAVAAGGPPVLEGPASVRDVVLQAERARSFLSGLLVGLGVLMVVSLTSLCNPHTSERWLPLMLAGFTSGFLMLRGRSYVDRWQSITLAVTAVIVVAAVSVRYALVLSSPLSVSIVASLLVLLPAAGMTAAAVVPNTIYSPLFRKFVEWTEYLCLMPIFPLAFWLMNVYAAIRYR.

Helical transmembrane passes span 137–157 (VVAVQVGAGMVGTGVILASGV), 169–189 (LTTIFASVIAVLVLMVAMMLL), 200–220 (VADIMLVSGLAPLTVAAASAP), 224–244 (VGSPQAVLGFGVLSIAAALAL), 250–270 (RLAIYTAIVTICGLTTLASLS), 272–292 (MVAATSAVTLFATMLLICVVM), 359–379 (FLSGLLVGLGVLMVVSLTSLC), 414–434 (ITLAVTAVIVVAAVSVRYALV), 443–463 (IVASLLVLLPAAGMTAAAVVP), and 480–500 (YLCLMPIFPLAFWLMNVYAAI).

The protein belongs to the EccD/Snm4 family. In terms of assembly, part of the ESX-5 / type VII secretion system (T7SS), which is composed of cytosolic and membrane components. The ESX-5 membrane complex is composed of EccB5, EccC5, EccD5 and EccE5.

The protein localises to the cell inner membrane. Part of the ESX-5 specialized secretion system, which is responsible for the secretion of EsxN and a number of PE_PGRS and PPE proteins. This component is essential for ESX-5 complex stability and secretion. This is ESX-5 secretion system protein EccD5 from Mycobacterium marinum (strain ATCC BAA-535 / M).